A 164-amino-acid chain; its full sequence is Anterior gradient protein 3 (164 aa).

The first 19 residues, 1-19 (MYFPMIELTLVLLASSNLA), serve as a signal peptide directing secretion. The Prevents secretion from ER motif lies at 161–164 (QTEL).

Belongs to the AGR family.

Its subcellular location is the endoplasmic reticulum. The protein resides in the cytoplasm. Functionally, required for calcium-mediated regulation of ciliary beat frequency in the airway. The protein is Anterior gradient protein 3 of Xenopus tropicalis (Western clawed frog).